A 391-amino-acid chain; its full sequence is Elongation factor Tu (391 aa).

Residues 10–201 (KPHVNIGTIG…AVDSYIPTPE (192 aa)) enclose the tr-type G domain. Residues 19–26 (GHVDHGKT) are G1. 19–26 (GHVDHGKT) lines the GTP pocket. Threonine 26 contacts Mg(2+). The segment at 55-59 (GITIS) is G2. The tract at residues 76–79 (DCPG) is G3. Residues 76–80 (DCPGH) and 131–134 (NKCD) contribute to the GTP site. The G4 stretch occupies residues 131 to 134 (NKCD). Residues 169 to 171 (SAL) are G5.

Belongs to the TRAFAC class translation factor GTPase superfamily. Classic translation factor GTPase family. EF-Tu/EF-1A subfamily. In terms of assembly, monomer.

The protein resides in the cytoplasm. It carries out the reaction GTP + H2O = GDP + phosphate + H(+). Its function is as follows. GTP hydrolase that promotes the GTP-dependent binding of aminoacyl-tRNA to the A-site of ribosomes during protein biosynthesis. In Brucella canis (strain ATCC 23365 / NCTC 10854 / RM-666), this protein is Elongation factor Tu.